A 439-amino-acid polypeptide reads, in one-letter code: Divalent metal cation transporter MntH (439 aa).

Transmembrane regions (helical) follow at residues 32–52 (GASM…AYMD), 67–87 (GYAL…FQSL), 121–141 (IAAM…LSLL), 144–164 (MPLL…LLLE), 173–193 (LAIG…LFIT), 214–234 (ALLI…LFLH), 261–281 (VVVA…MAAG), 301–321 (APLL…ASGI), 350–370 (AVTM…TQAL), 371–391 (VLSQ…LLWF), and 406–426 (FIAV…AVLI).

Belongs to the NRAMP family.

Its subcellular location is the cell inner membrane. H(+)-stimulated, divalent metal cation uptake system. In Verminephrobacter eiseniae (strain EF01-2), this protein is Divalent metal cation transporter MntH.